The following is a 304-amino-acid chain: MNKTHFNHISVLKQEAIDFLKIKPEGIYVDATLGQCGHTIEIANLLQQGFLYSFDQDVEACTNAKKILPPHLPIEIIHSNFSHLKTQLAQRNVFQLDGILFDLGLSSCQIDNPQRGFSYLHNTPLDMRMNVNQTITAQYILNNYSFAQLKNIFKVYGEVKNAALVASEIIKQRPLCTSYDLVAITDRFCNRQKGHSAKKIFQALRIEVNQELESLKQALEQSLDLLKPNAMIVVISFHSLEDRIVKHFFKKNSTFVLPKKMPITIMPQTPLSIITKKAFLPSEEEMQNNSRSISAKLRVAVKNG.

S-adenosyl-L-methionine contacts are provided by residues 36–38 (CGH), D55, F81, D102, and Q109.

Belongs to the methyltransferase superfamily. RsmH family.

It is found in the cytoplasm. It carries out the reaction cytidine(1402) in 16S rRNA + S-adenosyl-L-methionine = N(4)-methylcytidine(1402) in 16S rRNA + S-adenosyl-L-homocysteine + H(+). Functionally, specifically methylates the N4 position of cytidine in position 1402 (C1402) of 16S rRNA. This Onion yellows phytoplasma (strain OY-M) protein is Ribosomal RNA small subunit methyltransferase H.